The primary structure comprises 220 residues: MHRLRGCCARPRGAPLRAERSRASSRALRVLVDMDGVLADFEGGFLRKFRARFPDLPFVALEDRRGFWVSEQYGRLQPGLSEKAISIWESKDFFFELEPLPGAVEAVKQMANLQNTDVFICTSPIKMFKYCPYEKYAWVEKHFGPDFLEQIVLTRDKTVISADLLIDDRPDITGAEPHPSWEHILFTSCHNYHLQLQPPRRRLHSWADDWKAILDSKRLR.

The N-terminal 23 residues, 1–23 (MHRLRGCCARPRGAPLRAERSRA), are a transit peptide targeting the mitochondrion. The Nucleophile role is filled by aspartate 33. Mg(2+)-binding residues include aspartate 33 and aspartate 35. Residue aspartate 35 is the Proton donor of the active site. Positions 35, 41, 67, 68, 69, 88, 122, and 157 each coordinate substrate. Aspartate 168 serves as a coordination point for Mg(2+).

This sequence belongs to the 5'(3')-deoxyribonucleotidase family. Homodimer. It depends on Mg(2+) as a cofactor.

Its subcellular location is the mitochondrion. Functionally, dephosphorylates specifically the 5' and 2'(3')-phosphates of uracil and thymine deoxyribonucleotides, and so protects mitochondrial DNA replication from excess dTTP. Has only marginal activity towards dIMP and dGMP. The sequence is that of 5'(3')-deoxyribonucleotidase, mitochondrial (Nt5m) from Mus musculus (Mouse).